We begin with the raw amino-acid sequence, 518 residues long: MPSISPASDADRALVIGSGLGGLAAAMRLGAKGWRVTVIDKLDVPGGRGSSITQEGHRFDLGPTIVTVPQSLRDLWKTCGRDFDADVELKPIDPFYEVRWPDGSHFTVRQSTEAMKAEVARLSPGDVAGYEKFLKDSEKRYWFGYEDLGRRSMHKLWDLIKVLPTFGMMRADRSVYQHAALRVKDERLRMALSFHPLFIGGDPFNVTSMYILVSQLEKEFGVHYAIGGVAAIAAAMAKVIEGQGGSFRMNTEVDEILVEKGTATGVRLASGEVLRAGLVVSNADAGHTYMRLLRNHPRRRWTDAHVKSRRWSMGLFVWYFGTKGTKGMWPDVGHHTIVNAPRYKGLVEDIFLKGKLAKDMSLYIHRPSITDPTVAPEGDDTFYALSPVPHLKQAQPVDWQAVAEPYRESVLEVLEQSMPGIGERIGPSLVFTPETFRDRYLSPWGAGFSIEPRILQSAWFRPHNISEEVANLFLVGAGTHPGAGVPGVIGSAEVMAKLAPDAPRARREAEPAERLAAE.

An FAD-binding site is contributed by 14–47; sequence LVIGSGLGGLAAAMRLGAKGWRVTVIDKLDVPGG.

The protein belongs to the carotenoid/retinoid oxidoreductase family. The cofactor is FAD.

It carries out the reaction 15-cis-phytoene + 3 A = all-trans-neurosporene + 3 AH2. It functions in the pathway carotenoid biosynthesis. Its function is as follows. Converts phytoene into all-trans-neurosporene as the major product, via the intermediary of phytofluene and zeta-carotene, by the introduction of three double bonds. The sequence is that of Phytoene desaturase (neurosporene-forming) (crtI) from Cereibacter sphaeroides (strain ATCC 17023 / DSM 158 / JCM 6121 / CCUG 31486 / LMG 2827 / NBRC 12203 / NCIMB 8253 / ATH 2.4.1.) (Rhodobacter sphaeroides).